The chain runs to 228 residues: Cytochrome c oxidase subunit 2 (228 aa).

The Mitochondrial intermembrane portion of the chain corresponds to 1–26; the sequence is MSQWFQLGLQNGNSPLMEQLIFFHDH. Residues 27-48 traverse the membrane as a helical segment; sequence ALLVVILITSLVGFFLAALFSN. The Mitochondrial matrix segment spans residues 49–62; the sequence is KFLHRYLLDGQAIE. Residues 63-82 traverse the membrane as a helical segment; that stretch reads TVWTVIPAIILVAIALPSIR. Residues 83 to 228 lie on the Mitochondrial intermembrane side of the membrane; it reads LLYLIDEIHN…FLKWLELQIS (146 aa). Residues His-161, Cys-196, Glu-198, Cys-200, His-204, and Met-207 each coordinate Cu cation. Residue Glu-198 coordinates Mg(2+).

The protein belongs to the cytochrome c oxidase subunit 2 family. As to quaternary structure, component of the cytochrome c oxidase (complex IV, CIV), a multisubunit enzyme composed of a catalytic core of 3 subunits and several supernumerary subunits. The complex exists as a monomer or a dimer and forms supercomplexes (SCs) in the inner mitochondrial membrane with ubiquinol-cytochrome c oxidoreductase (cytochrome b-c1 complex, complex III, CIII). The cofactor is Cu cation.

It localises to the mitochondrion inner membrane. It carries out the reaction 4 Fe(II)-[cytochrome c] + O2 + 8 H(+)(in) = 4 Fe(III)-[cytochrome c] + 2 H2O + 4 H(+)(out). Its function is as follows. Component of the cytochrome c oxidase, the last enzyme in the mitochondrial electron transport chain which drives oxidative phosphorylation. The respiratory chain contains 3 multisubunit complexes succinate dehydrogenase (complex II, CII), ubiquinol-cytochrome c oxidoreductase (cytochrome b-c1 complex, complex III, CIII) and cytochrome c oxidase (complex IV, CIV), that cooperate to transfer electrons derived from NADH and succinate to molecular oxygen, creating an electrochemical gradient over the inner membrane that drives transmembrane transport and the ATP synthase. Cytochrome c oxidase is the component of the respiratory chain that catalyzes the reduction of oxygen to water. Electrons originating from reduced cytochrome c in the intermembrane space (IMS) are transferred via the dinuclear copper A center (CU(A)) of subunit 2 and heme A of subunit 1 to the active site in subunit 1, a binuclear center (BNC) formed by heme A3 and copper B (CU(B)). The BNC reduces molecular oxygen to 2 water molecules using 4 electrons from cytochrome c in the IMS and 4 protons from the mitochondrial matrix. This Artemia franciscana (Brine shrimp) protein is Cytochrome c oxidase subunit 2 (COII).